Here is a 558-residue protein sequence, read N- to C-terminus: Arginine--tRNA ligase (558 aa).

The 'HIGH' region signature appears at 119–129 (ANPNGPLHVGH).

Belongs to the class-I aminoacyl-tRNA synthetase family.

The protein resides in the cytoplasm. The catalysed reaction is tRNA(Arg) + L-arginine + ATP = L-arginyl-tRNA(Arg) + AMP + diphosphate. This chain is Arginine--tRNA ligase, found in Methanoregula boonei (strain DSM 21154 / JCM 14090 / 6A8).